Consider the following 369-residue polypeptide: Protein RecA (369 aa).

An ATP-binding site is contributed by 77–84; it reads GPESSGKT.

Belongs to the RecA family.

Its subcellular location is the cytoplasm. Can catalyze the hydrolysis of ATP in the presence of single-stranded DNA, the ATP-dependent uptake of single-stranded DNA by duplex DNA, and the ATP-dependent hybridization of homologous single-stranded DNAs. It interacts with LexA causing its activation and leading to its autocatalytic cleavage. This is Protein RecA from Corynebacterium pseudotuberculosis (strain C231).